Here is a 122-residue protein sequence, read N- to C-terminus: Large ribosomal subunit protein uL22 (122 aa).

The tract at residues valine 102–lysine 122 is disordered.

The protein belongs to the universal ribosomal protein uL22 family. In terms of assembly, part of the 50S ribosomal subunit.

In terms of biological role, this protein binds specifically to 23S rRNA; its binding is stimulated by other ribosomal proteins, e.g. L4, L17, and L20. It is important during the early stages of 50S assembly. It makes multiple contacts with different domains of the 23S rRNA in the assembled 50S subunit and ribosome. Its function is as follows. The globular domain of the protein is located near the polypeptide exit tunnel on the outside of the subunit, while an extended beta-hairpin is found that lines the wall of the exit tunnel in the center of the 70S ribosome. The chain is Large ribosomal subunit protein uL22 from Helicobacter pylori (strain ATCC 700392 / 26695) (Campylobacter pylori).